We begin with the raw amino-acid sequence, 498 residues long: Cytoskeletal signaling protein slm1 (498 aa).

The tract at residues 1-23 (MELSGKSEFPTRTEIPNQASNGD) is disordered. Ser175 and Ser312 each carry phosphoserine. The PH domain maps to 300 to 405 (VPIMAGYLIR…WWEALNTHIA (106 aa)). A disordered region spans residues 416 to 475 (ANGPSAVSDSDDDDDDPNDFRPAVERQSSTMNTRMSQPSSAVNTNRSYGSEQIPSYADSQ). Positions 441–475 (RQSSTMNTRMSQPSSAVNTNRSYGSEQIPSYADSQ) are enriched in polar residues.

The protein localises to the cell tip. In terms of biological role, effector of the TORC2- and calcineurin-signaling pathways. Mediates actin polarization via inhibition of calcineurin-dependent transcription. May play a role in the response to the disruption of sphingolipid synthesis, where dephosphorylation of slm1 leads to the activation and phosphorylation of ypk1 through the TORC2 and PKH1 pathways, which in turn phosphorylates orm1 and lag1 to activate sphingolipid synthesis. This chain is Cytoskeletal signaling protein slm1 (slm1), found in Schizosaccharomyces pombe (strain 972 / ATCC 24843) (Fission yeast).